The sequence spans 396 residues: Inositol polyphosphate multikinase (396 aa).

The segment covering 1-13 has biased composition (low complexity); that stretch reads MAAEPPALRLRPP. The disordered stretch occupies residues 1 to 22; the sequence is MAAEPPALRLRPPGSTGDSPPV. An N-acetylalanine modification is found at A2. S19 bears the Phosphoserine mark. An ATP-binding site is contributed by K58. Substrate is bound at residue R65. ATP contacts are provided by residues 114-116 and D127; that span reads EDV. Substrate contacts are provided by residues K129, 143-150, and Q179; that span reads KIQQQVSK. Residues 300–310 carry the Nuclear localization signal motif; that stretch reads RHRKLYAKKHQ. Residue D365 participates in ATP binding.

Belongs to the inositol phosphokinase (IPK) family. The cofactor is Mg(2+).

It localises to the nucleus. It catalyses the reaction 1D-myo-inositol 1,4,5-trisphosphate + 2 ATP = 1D-myo-inositol 1,3,4,5,6-pentakisphosphate + 2 ADP + 2 H(+). The enzyme catalyses 1D-myo-inositol 1,3,4,6-tetrakisphosphate + ATP = 1D-myo-inositol 1,3,4,5,6-pentakisphosphate + ADP + H(+). The catalysed reaction is 1-octadecanoyl-2-(5Z,8Z,11Z,14Z)-eicosatetraenoyl-sn-glycero-3-phospho-1D-myo-inositol 4,5-bisphosphate + ATP = 1-octadecanoyl-2-(5Z,8Z,11Z,14Z-eicosatetraenoyl)-sn-glycero-3-phospho-(1D-myo-inositol 3,4,5-triphosphate) + ADP + H(+). It carries out the reaction a 1,2-diacyl-sn-glycero-3-phospho-(1D-myo-inositol-4,5-bisphosphate) + ATP = a 1,2-diacyl-sn-glycero-3-phospho-(1D-myo-inositol-3,4,5-trisphosphate) + ADP + H(+). It catalyses the reaction 1D-myo-inositol 1,4,5,6-tetrakisphosphate + ATP = 1D-myo-inositol 1,3,4,5,6-pentakisphosphate + ADP + H(+). The protein operates within phospholipid metabolism; phosphatidylinositol metabolism. Inositol phosphate kinase with a broad substrate specificity. Phosphorylates inositol 1,4,5-trisphosphate (Ins(1,4,5)P3) first to inositol 1,3,4,5-tetrakisphosphate and then to inositol 1,3,4,5,6-pentakisphosphate (Ins(1,3,4,5,6)P5). Phosphorylates inositol 1,3,4,6-tetrakisphosphate (Ins(1,3,4,6)P4). Phosphorylates inositol 1,4,5,6-tetrakisphosphate (Ins(1,4,5,6)P4). Phosphorylates glycero-3-phospho-1D-myo-inositol 4,5-bisphosphate to glycero-3-phospho-1D-myo-inositol 3,4,5-trisphosphate. Plays an important role in MLKL-mediated necroptosis via its role in the biosynthesis of inositol pentakisphosphate (InsP5) and inositol hexakisphosphate (InsP6). Binding of these highly phosphorylated inositol phosphates to MLKL mediates the release of an N-terminal auto-inhibitory region, leading to activation of the kinase. Essential for activated phospho-MLKL to oligomerize and localize to the cell membrane during necroptosis. Required for normal embryonic development, probably via its role in the biosynthesis of inositol 1,3,4,5,6-pentakisphosphate (Ins(1,3,4,5,6)P5) and inositol hexakisphosphate (InsP6). The polypeptide is Inositol polyphosphate multikinase (Ipmk) (Mus musculus (Mouse)).